The sequence spans 226 residues: Phosphoribosylformylglycinamidine synthase subunit PurQ (226 aa).

In terms of domain architecture, Glutamine amidotransferase type-1 spans 4–226 (RIGVVTFPGS…TSILKKLVNA (223 aa)). Catalysis depends on Cys87, which acts as the Nucleophile. Active-site residues include His196 and Glu198.

In terms of assembly, part of the FGAM synthase complex composed of 1 PurL, 1 PurQ and 2 PurS subunits.

It localises to the cytoplasm. It carries out the reaction N(2)-formyl-N(1)-(5-phospho-beta-D-ribosyl)glycinamide + L-glutamine + ATP + H2O = 2-formamido-N(1)-(5-O-phospho-beta-D-ribosyl)acetamidine + L-glutamate + ADP + phosphate + H(+). The enzyme catalyses L-glutamine + H2O = L-glutamate + NH4(+). It participates in purine metabolism; IMP biosynthesis via de novo pathway; 5-amino-1-(5-phospho-D-ribosyl)imidazole from N(2)-formyl-N(1)-(5-phospho-D-ribosyl)glycinamide: step 1/2. Part of the phosphoribosylformylglycinamidine synthase complex involved in the purines biosynthetic pathway. Catalyzes the ATP-dependent conversion of formylglycinamide ribonucleotide (FGAR) and glutamine to yield formylglycinamidine ribonucleotide (FGAM) and glutamate. The FGAM synthase complex is composed of three subunits. PurQ produces an ammonia molecule by converting glutamine to glutamate. PurL transfers the ammonia molecule to FGAR to form FGAM in an ATP-dependent manner. PurS interacts with PurQ and PurL and is thought to assist in the transfer of the ammonia molecule from PurQ to PurL. The polypeptide is Phosphoribosylformylglycinamidine synthase subunit PurQ (Streptomyces coelicolor (strain ATCC BAA-471 / A3(2) / M145)).